The following is a 132-amino-acid chain: DNA-binding protein inhibitor ID-2 (132 aa).

A bHLH domain is found at 23–75; sequence ARSKTPVDDPMSLLYNMNDCYSKLKELVPSIPQNKKVSKMEILQHVIDYILDL. A Nuclear export signal motif is present at residues 105-114; that stretch reads LNTDISILSL.

Heterodimer with other HLH proteins.

It is found in the cytoplasm. It localises to the nucleus. Functionally, transcriptional regulator (lacking a basic DNA binding domain) which negatively regulates the basic helix-loop-helix (bHLH) transcription factors by forming heterodimers and inhibiting their DNA binding and transcriptional activity. Inhibits the activity of both neurogenic (neurod1/neuroD) and myogenic (myod1/myoD) bHLH factors. May play a role in the regulation of the circadian clock. This is DNA-binding protein inhibitor ID-2 from Xenopus tropicalis (Western clawed frog).